The primary structure comprises 204 residues: ATP-dependent Clp protease proteolytic subunit 1 (204 aa).

S97 acts as the Nucleophile in catalysis. H122 is an active-site residue.

It belongs to the peptidase S14 family. Fourteen ClpP subunits assemble into 2 heptameric rings which stack back to back to give a disk-like structure with a central cavity, resembling the structure of eukaryotic proteasomes.

Its subcellular location is the cytoplasm. It carries out the reaction Hydrolysis of proteins to small peptides in the presence of ATP and magnesium. alpha-casein is the usual test substrate. In the absence of ATP, only oligopeptides shorter than five residues are hydrolyzed (such as succinyl-Leu-Tyr-|-NHMec, and Leu-Tyr-Leu-|-Tyr-Trp, in which cleavage of the -Tyr-|-Leu- and -Tyr-|-Trp bonds also occurs).. In terms of biological role, cleaves peptides in various proteins in a process that requires ATP hydrolysis. Has a chymotrypsin-like activity. Plays a major role in the degradation of misfolded proteins. The chain is ATP-dependent Clp protease proteolytic subunit 1 from Trichormus variabilis (strain ATCC 29413 / PCC 7937) (Anabaena variabilis).